We begin with the raw amino-acid sequence, 450 residues long: RUN domain-containing protein 3B (450 aa).

The RUN domain maps to 48-180 (DDTSAEFINF…IDFSFCLKGE (133 aa)). The segment at 203–225 (DSISSDEEEMRTLGSSGSEAGTP) is disordered. Residues 291-317 (ISHKLEKEQLEIIILELQDQLTVLKNH) adopt a coiled-coil conformation.

The protein belongs to the RUNDC3 family.

The protein is RUN domain-containing protein 3B (rundc3b) of Danio rerio (Zebrafish).